Reading from the N-terminus, the 239-residue chain is Purine nucleoside phosphorylase DeoD-type (239 aa).

Position 5 (His-5) interacts with a purine D-ribonucleoside. Residues Gly-21, Arg-25, Arg-44, and 88–91 (RVGS) contribute to the phosphate site. A purine D-ribonucleoside is bound by residues 180–182 (EME) and 204–205 (SD). Asp-205 (proton donor) is an active-site residue.

Belongs to the PNP/UDP phosphorylase family. As to quaternary structure, homohexamer; trimer of homodimers.

The catalysed reaction is a purine D-ribonucleoside + phosphate = a purine nucleobase + alpha-D-ribose 1-phosphate. It catalyses the reaction a purine 2'-deoxy-D-ribonucleoside + phosphate = a purine nucleobase + 2-deoxy-alpha-D-ribose 1-phosphate. Its function is as follows. Catalyzes the reversible phosphorolytic breakdown of the N-glycosidic bond in the beta-(deoxy)ribonucleoside molecules, with the formation of the corresponding free purine bases and pentose-1-phosphate. This Salmonella heidelberg (strain SL476) protein is Purine nucleoside phosphorylase DeoD-type.